The primary structure comprises 143 residues: Large ribosomal subunit protein uL11 (143 aa).

The protein belongs to the universal ribosomal protein uL11 family. As to quaternary structure, part of the ribosomal stalk of the 50S ribosomal subunit. Interacts with L10 and the large rRNA to form the base of the stalk. L10 forms an elongated spine to which L12 dimers bind in a sequential fashion forming a multimeric L10(L12)X complex. One or more lysine residues are methylated.

Forms part of the ribosomal stalk which helps the ribosome interact with GTP-bound translation factors. In Cellvibrio japonicus (strain Ueda107) (Pseudomonas fluorescens subsp. cellulosa), this protein is Large ribosomal subunit protein uL11.